Consider the following 466-residue polypeptide: Uronate isomerase (466 aa).

Belongs to the metallo-dependent hydrolases superfamily. Uronate isomerase family.

The catalysed reaction is D-glucuronate = D-fructuronate. It catalyses the reaction aldehydo-D-galacturonate = keto-D-tagaturonate. It functions in the pathway carbohydrate metabolism; pentose and glucuronate interconversion. In Lachnoclostridium phytofermentans (strain ATCC 700394 / DSM 18823 / ISDg) (Clostridium phytofermentans), this protein is Uronate isomerase.